Reading from the N-terminus, the 534-residue chain is Alkaline serine exoprotease A (534 aa).

An N-terminal signal peptide occupies residues Met-1–Ala-21. Positions Phe-22–Asp-141 are excised as a propeptide. The region spanning Arg-57–Leu-134 is the Inhibitor I9 domain. The 272-residue stretch at Ile-148–Asp-419 folds into the Peptidase S8 domain. Active-site charge relay system residues include Asp-180, His-213, and Ser-363. The tract at residues Asp-423–Pro-442 is disordered.

Belongs to the peptidase S8 family.

The sequence is that of Alkaline serine exoprotease A (proA) from Vibrio alginolyticus.